A 1253-amino-acid chain; its full sequence is MAAQVTLEDALSNVDLLEELPLPDQQPCIEPPPSSLLYQPNFNTNFEDRNAFVTGIARYIEQATVHSSMNEMLEEGQEYAVMLYTWRSCSRAIPQVKCNEQPNRVEIYEKTVEVLEPEVTKLMNFMYFQRNAIERFCGEVRRLCHAERRKDFVSEAYLITLGKFINMFAVLDELKNMKCSVKNDHSAYKRAAQFLRKMADPQSIQESQNLSMFLANHNKITQSLQQQLEVISGYEELLADIVNLCVDYYENRMYLTPSEKHMLLKVMGFGLYLMDGSVSNIYKLDAKKRINLSKIDKYFKQLQVVPLFGDMQIELARYIKTSAHYEENKSRWTCTSSGSSPQYNICEQMIQIREDHMRFISELARYSNSEVVTGSGRQEAQKTDAEYRKLFDLALQGLQLLSQWSAHVMEVYSWKLVHPTDKYSNKDCPDSAEEYERATRYNYTSEEKFALVEVIAMIKGLQVLMGRMESVFNHAIRHTVYAALQDFSQVTLREPLRQAIKKKKNVIQSVLQAIRKTVCDWETGHEPFNDPALRGEKDPKSGFDIKVPRRAVGPSSTQLYMVRTMLESLIADKSGSKKTLRSSLEGPTILDIEKFHRESFFYTHLINFSETLQQCCDLSQLWFREFFLELTMGRRIQFPIEMSMPWILTDHILETKEASMMEYVLYSLDLYNDSAHYALTRFNKQFLYDEIEAEVNLCFDQFVYKLADQIFAYYKVMAGSLLLDKRLRSECKNQGATIHLPPSNRYETLLKQRHVQLLGRSIDLNRLITQRVSAAMYKSLELAIGRFESEDLTSIVELDGLLEINRMTHKLLSRYLTLDGFDAMFREANHNVSAPYGRITLHVFWELNYDFLPNYCYNGSTNRFVRTVLPFSQEFQRDKQPNAQPQYLHGSKALNLAYSSIYGSYRNFVGPPHFQVICRLLGYQGIAVVMEELLKVVKSLLQGTILQYVKTLMEVMPKICRLPRHEYGSPGILEFFHHQLKDIVEYAELKTVCFQNLREVGNAILFCLLIEQSLSLEEVCDLLHAAPFQNILPRVHVKEGERLDAKMKRLESKYAPLHLVPLIERLGTPQQIAIAREGDLLTKERLCCGLSMFEVILTRIRSFLDDPIWRGPLPSNGVMHVDECVEFHRLWSAMQFVYCIPVGTHEFTVEQCFGDGLHWAGCMIIVLLGQQRRFAVLDFCYHLLKVQKHDGKDEIIKNVPLKKMVERIRKFQILNDEIITILDKYLKSGDGEGTPVEHVRCFQPPIHQSLASS.

Phosphoserine is present on serine 583. Threonine 1234 is modified (phosphothreonine).

It belongs to the CYFIP family. In terms of assembly, component of the WAVE1 complex composed of ABI2, CYFIP1 or CYFIP2, BRK1, NCKAP1 and WASF1/WAVE1. Within the complex, a heterodimer containing NCKAP1 and CYFIP1 interacts with a heterotrimer formed by WAVE1, ABI2 and BRK1. Component of the CYFIP1-EIF4E-FMR1 complex which is composed of CYFIP, EIF4E and FMR1. Interacts with FMR1 but does not bind to related proteins FXR1 or FXR2. Interaction with EIF4E stimulates FMR1 binding. Component of the WAVE2 complex composed of ABI1, CYFIP1/SRA1, NCKAP1/NAP1 (NCKAP1l/HEM1 in hematopoietic cells) and WASF2/WAVE2. Interacts with the active GTP-bound form of RAC1. Interacts through its C-terminus with the C-terminus of DPYSL2/CRMP2 which is necessary for DPYSL2-induced axon outgrowth. Interacts with NYAP1, NYAP2 and MYO16. Interacts with TMEM108 (via N-terminus); the interaction associates TMEM108 with the WAVE1 complex.

Its subcellular location is the cytoplasm. It is found in the perinuclear region. The protein resides in the cell projection. The protein localises to the lamellipodium. It localises to the ruffle. Its subcellular location is the synapse. It is found in the synaptosome. Its function is as follows. Component of the CYFIP1-EIF4E-FMR1 complex which binds to the mRNA cap and mediates translational repression. In the CYFIP1-EIF4E-FMR1 complex this subunit is an adapter between EIF4E and FMR1. Promotes the translation repression activity of FMR1 in brain probably by mediating its association with EIF4E and mRNA. Regulates formation of membrane ruffles and lamellipodia. Plays a role in axon outgrowth. Binds to F-actin but not to RNA. Part of the WAVE complex that regulates actin filament reorganization via its interaction with the Arp2/3 complex. Actin remodeling activity is regulated by RAC1. Regulator of epithelial morphogenesis. As component of the WAVE1 complex, required for BDNF-NTRK2 endocytic trafficking and signaling from early endosomes. May act as an invasion suppressor in cancers. This is Cytoplasmic FMR1-interacting protein 1 from Homo sapiens (Human).